The primary structure comprises 406 residues: Linalool 8-monooxygenase (406 aa).

Residue Cys-355 participates in heme binding.

Belongs to the cytochrome P450 family. Heme is required as a cofactor.

The catalysed reaction is linalool + 2 reduced [NADPH--hemoprotein reductase] + 2 O2 = (6E)-8-oxolinalool + 2 oxidized [NADPH--hemoprotein reductase] + 3 H2O + 2 H(+). Its pathway is terpene metabolism; linalool degradation. Catalyzes the 8-methyl hydroxylation of linalool. This chain is Linalool 8-monooxygenase (linC), found in Pseudomonas putida (Arthrobacter siderocapsulatus).